A 401-amino-acid chain; its full sequence is Tryptophan synthase beta chain (401 aa).

Residue Lys-88 is modified to N6-(pyridoxal phosphate)lysine.

Belongs to the TrpB family. As to quaternary structure, tetramer of two alpha and two beta chains. Requires pyridoxal 5'-phosphate as cofactor.

It carries out the reaction (1S,2R)-1-C-(indol-3-yl)glycerol 3-phosphate + L-serine = D-glyceraldehyde 3-phosphate + L-tryptophan + H2O. It functions in the pathway amino-acid biosynthesis; L-tryptophan biosynthesis; L-tryptophan from chorismate: step 5/5. Functionally, the beta subunit is responsible for the synthesis of L-tryptophan from indole and L-serine. The protein is Tryptophan synthase beta chain of Shewanella denitrificans (strain OS217 / ATCC BAA-1090 / DSM 15013).